The sequence spans 402 residues: Sulfate adenylyltransferase (402 aa).

Belongs to the sulfate adenylyltransferase family.

The enzyme catalyses sulfate + ATP + H(+) = adenosine 5'-phosphosulfate + diphosphate. It participates in sulfur metabolism; hydrogen sulfide biosynthesis; sulfite from sulfate: step 1/3. The protein is Sulfate adenylyltransferase of Vesicomyosocius okutanii subsp. Calyptogena okutanii (strain HA).